Reading from the N-terminus, the 143-residue chain is Large ribosomal subunit protein uL15 (143 aa).

The tract at residues 1–52 is disordered; it reads MKLNTLAPAAGSKSAPKRLGRGIGSGLGKTSGKGHKGQKARSGGYHKVGFEG. Over residues 21-31 the composition is skewed to gly residues; it reads RGIGSGLGKTS.

This sequence belongs to the universal ribosomal protein uL15 family. In terms of assembly, part of the 50S ribosomal subunit.

In terms of biological role, binds to the 23S rRNA. In Francisella tularensis subsp. mediasiatica (strain FSC147), this protein is Large ribosomal subunit protein uL15.